The chain runs to 338 residues: tRNA N6-adenosine threonylcarbamoyltransferase (338 aa).

The Fe cation site is built by His-110 and His-114. Residues 132–136 (VLSGG), Asp-165, Gly-178, and Asn-274 contribute to the substrate site. Asp-298 contributes to the Fe cation binding site.

The protein belongs to the KAE1 / TsaD family. Fe(2+) serves as cofactor.

Its subcellular location is the cytoplasm. It catalyses the reaction L-threonylcarbamoyladenylate + adenosine(37) in tRNA = N(6)-L-threonylcarbamoyladenosine(37) in tRNA + AMP + H(+). In terms of biological role, required for the formation of a threonylcarbamoyl group on adenosine at position 37 (t(6)A37) in tRNAs that read codons beginning with adenine. Is involved in the transfer of the threonylcarbamoyl moiety of threonylcarbamoyl-AMP (TC-AMP) to the N6 group of A37, together with TsaE and TsaB. TsaD likely plays a direct catalytic role in this reaction. In Borrelia recurrentis (strain A1), this protein is tRNA N6-adenosine threonylcarbamoyltransferase.